The following is a 387-amino-acid chain: MATTKSFLILSVMILATTSSTFASLEEMVTVLSIDGGGIKGIIPGTILEFLEGQLQKMDNNADARLADYFDVIGGTSTGGLLTAMITTPNENNRPFAAANEIVPFYFEHGPHIFNSSTGQFFGPKYDGKYLMQVLQEKLGETRVHQALTEVAISSFDIKTNKPVIFTKSNLAKSPELDAKMYDICYSTAAAPTYFPPHYFATNTINGDKYEFNLVDGAVATVADPALLSVSVATRRAQEDPAFASIRSLNYKKMLLLSLGTGTTSEFDKTHTAEETAKWGALQWMLVIQQMTEAASSYMTDYYLSTVFQDLHSQNNYLRVQENALTGTTTKADDASEANMELLAQVGENLLKKPVSKDNPETYEEALKRFAKLLSDRKKLRANKASY.

Positions 1–23 (MATTKSFLILSVMILATTSSTFA) are cleaved as a signal peptide. The 199-residue stretch at 32–230 (LSIDGGGIKG…TVADPALLSV (199 aa)) folds into the PNPLA domain. The GXGXXG signature appears at 36 to 41 (GGGIKG). A GXSXG motif is present at residues 75-79 (GTSTG). The active-site Nucleophile is S77. N115 carries N-linked (GlcNAc...) asparagine glycosylation. The active-site Proton acceptor is the D216. Residues 216–218 (DGA) carry the DGA/G motif. A coiled-coil region spans residues 361–385 (ETYEEALKRFAKLLSDRKKLRANKA).

The protein belongs to the patatin family. Tuber.

The protein resides in the vacuole. Functionally, probable lipolytic acyl hydrolase (LAH), an activity which is thought to be involved in the response of tubers to pathogens. The polypeptide is Patatin-01 (Solanum tuberosum (Potato)).